The chain runs to 312 residues: Pre-mRNA-splicing factor 38A (312 aa).

The interval 1-179 (MANRTVKDAH…VLEEAEQLEP (179 aa)) is N-terminal protein interaction domain. Residues Ser11, Ser193, Ser194, Ser209, and Ser226 each carry the phosphoserine modification. Positions 170 to 204 (VLEEAEQLEPRVSALEEDMDDVESSEEEEEEDEKL) form a coiled coil. Residues 181–312 (VSALEEDMDD…SHKKSRRGNE (132 aa)) form a disordered region. Acidic residues predominate over residues 184–202 (LEEDMDDVESSEEEEEEDE). The segment covering 203-224 (KLERVPSPDHRRRSYRDLDKPR) has biased composition (basic and acidic residues). Composition is skewed to basic residues over residues 225 to 294 (RSPT…RSHS) and 301 to 312 (KKSHKKSRRGNE).

Belongs to the PRP38 family. In terms of assembly, component of the spliceosome B complex. Interacts (via N-terminal interaction domain) with ZMAT2 and MFAP1.

The protein resides in the nucleus. In terms of biological role, involved in pre-mRNA splicing as a component of the spliceosome. This is Pre-mRNA-splicing factor 38A (PRPF38A) from Bos taurus (Bovine).